Here is a 419-residue protein sequence, read N- to C-terminus: Dual specificity mitogen-activated protein kinase kinase 7 (419 aa).

The residue at position 2 (A2) is an N-acetylalanine. Residues 2 to 30 (AASSLEQKLSRLEAKLKQENREARRRIDL) are a coiled coil. A compositionally biased stretch (basic and acidic residues) spans 18-30 (KQENREARRRIDL). The interval 18 to 77 (KQENREARRRIDLNLDISPQRPRPTLQLPLANDGGSRSPSSESSPQHPTPPSRPRHMLGL) is disordered. Positions 36–63 (PQRPRPTLQLPLANDGGSRSPSSESSPQ) are enriched in low complexity. Residues 37–57 (QRPRPTLQLPLANDGGSRSPS) are d Domain. Residues 120-380 (LENLGEMGSG…YNKLLEHSFI (261 aa)) enclose the Protein kinase domain. Residues 126 to 134 (MGSGTCGQV) and K149 each bind ATP. D243 serves as the catalytic Proton acceptor. A Phosphoserine; by MAP3K modification is found at S271. The residue at position 275 (T275) is a Phosphothreonine; by MAP3K. The DVD domain stretch occupies residues 377–400 (HSFIKHYETLEVDVASWFKDVMAK). S411 carries the phosphoserine modification.

It belongs to the protein kinase superfamily. STE Ser/Thr protein kinase family. MAP kinase kinase subfamily. As to quaternary structure, interacts with VRK2. Interacts (via its D domain) with its substrates MAPK8/JNK1, MAPK9/JNK2 and MAPK10/JNK3. Interacts (via its DVD domain) with MAP3Ks activators like MAP3K5/ASK1 and MAP3K1/MEKK1. Interacts with MAPK8IP1/JIP1, MAPK8IP2/JIP2 and MAPK8IP3/JIP3 scaffold proteins. Interacts with RASSF7, the interaction promotes phosphorylation. Found in a complex with SH3RF1, RAC1, MAP3K11/MLK3, MAPK8IP1/JIP1 and MAPK8/JNK1. Found in a complex with SH3RF1, RAC2, MAP3K7/TAK1, MAPK8IP1/JIP1, MAPK8/JNK1 and MAPK9/JNK2. Mg(2+) serves as cofactor. Post-translationally, activated by phosphorylation on Ser-271 and Thr-275 by MAP kinase kinase kinases (MAP3Ks).

It is found in the nucleus. It localises to the cytoplasm. It catalyses the reaction L-seryl-[protein] + ATP = O-phospho-L-seryl-[protein] + ADP + H(+). It carries out the reaction L-threonyl-[protein] + ATP = O-phospho-L-threonyl-[protein] + ADP + H(+). The enzyme catalyses L-tyrosyl-[protein] + ATP = O-phospho-L-tyrosyl-[protein] + ADP + H(+). With respect to regulation, activated by phosphorylation by specific MAP kinase kinase kinases such as MAP3K1/MEKK1, MAP3K3/MEKK3, MAP3K11/MLK3 and MAP3K12/DLK. Functionally, dual specificity protein kinase which acts as an essential component of the MAP kinase signal transduction pathway. Essential component of the stress-activated protein kinase/c-Jun N-terminal kinase (SAP/JNK) signaling pathway. With MAP2K4/MKK4, is the one of the only known kinase to directly activate the stress-activated protein kinase/c-Jun N-terminal kinases MAPK8/JNK1, MAPK9/JNK2 and MAPK10/JNK3. MAP2K4/MKK4 and MAP2K7/MKK7 both activate the JNKs by phosphorylation, but they differ in their preference for the phosphorylation site in the Thr-Pro-Tyr motif. MAP2K4/MKK4 shows preference for phosphorylation of the Tyr residue and MAP2K7/MKK7 for the Thr residue. The monophosphorylation of JNKs on the Thr residue is sufficient to increase JNK activity indicating that MAP2K7/MKK7 is important to trigger JNK activity, while the additional phosphorylation of the Tyr residue by MAP2K4/MKK4 ensures optimal JNK activation. Has a specific role in JNK signal transduction pathway activated by pro-inflammatory cytokines. The MKK/JNK signaling pathway is also involved in mitochondrial death signaling pathway, including the release cytochrome c, leading to apoptosis. Part of a non-canonical MAPK signaling pathway, composed of the upstream MAP3K12 kinase and downstream MAP kinases MAPK1/ERK2 and MAPK3/ERK1, that enhances the AP-1-mediated transcription of APP in response to APOE. The sequence is that of Dual specificity mitogen-activated protein kinase kinase 7 from Rattus norvegicus (Rat).